A 382-amino-acid polypeptide reads, in one-letter code: Queuine tRNA-ribosyltransferase (382 aa).

The active-site Proton acceptor is aspartate 96. Substrate is bound by residues 96-100 (DSGGF), aspartate 151, glutamine 194, and glycine 221. The tract at residues 252-258 (GVGAPDS) is RNA binding. The active-site Nucleophile is the aspartate 271. The tract at residues 276–280 (TRIAR) is RNA binding; important for wobble base 34 recognition. Zn(2+)-binding residues include cysteine 309, cysteine 311, cysteine 314, and histidine 340.

The protein belongs to the queuine tRNA-ribosyltransferase family. As to quaternary structure, homodimer. Within each dimer, one monomer is responsible for RNA recognition and catalysis, while the other monomer binds to the replacement base PreQ1. Requires Zn(2+) as cofactor.

The catalysed reaction is 7-aminomethyl-7-carbaguanine + guanosine(34) in tRNA = 7-aminomethyl-7-carbaguanosine(34) in tRNA + guanine. The protein operates within tRNA modification; tRNA-queuosine biosynthesis. In terms of biological role, catalyzes the base-exchange of a guanine (G) residue with the queuine precursor 7-aminomethyl-7-deazaguanine (PreQ1) at position 34 (anticodon wobble position) in tRNAs with GU(N) anticodons (tRNA-Asp, -Asn, -His and -Tyr). Catalysis occurs through a double-displacement mechanism. The nucleophile active site attacks the C1' of nucleotide 34 to detach the guanine base from the RNA, forming a covalent enzyme-RNA intermediate. The proton acceptor active site deprotonates the incoming PreQ1, allowing a nucleophilic attack on the C1' of the ribose to form the product. After dissociation, two additional enzymatic reactions on the tRNA convert PreQ1 to queuine (Q), resulting in the hypermodified nucleoside queuosine (7-(((4,5-cis-dihydroxy-2-cyclopenten-1-yl)amino)methyl)-7-deazaguanosine). The protein is Queuine tRNA-ribosyltransferase of Lactococcus lactis subsp. lactis (strain IL1403) (Streptococcus lactis).